The sequence spans 222 residues: Putative hemin import ATP-binding protein HrtA (222 aa).

The region spanning 3–222 (LVVKDISKTF…QLYDGKIKNS (220 aa)) is the ABC transporter domain. ATP is bound at residue 39 to 46 (GASGSGKT).

It belongs to the ABC transporter superfamily. HrtA family. In terms of assembly, the complex is composed of two ATP-binding proteins (HrtA), two transmembrane proteins (HrtB) and a solute-binding protein.

It localises to the cell membrane. Functionally, part of the ABC transporter complex hrt involved in hemin import. Responsible for energy coupling to the transport system. The chain is Putative hemin import ATP-binding protein HrtA (hrtA) from Staphylococcus epidermidis (strain ATCC 35984 / DSM 28319 / BCRC 17069 / CCUG 31568 / BM 3577 / RP62A).